We begin with the raw amino-acid sequence, 195 residues long: MHPTDPSQPLGERLQGTNLYLVGMMGSGKSTVGPLLAKALGYRFLDADAVISQAAGCSIPEIFERDGEEGFRQLERQVLQQLSQWHSLVVATGGGIVTVPANWGELRQGVVIWLDVAEEELMRRLQADPGGRPLLAGDDPAGRLHGLLEKRQPLYGQADLRVSAQGEGASDISERILQQLPGLLKAPGAPQTTAP.

Residue 26-31 (GSGKST) participates in ATP binding. Serine 30 contributes to the Mg(2+) binding site. Residues aspartate 48, arginine 72, and glycine 94 each contribute to the substrate site. Arginine 132 contributes to the ATP binding site. Arginine 151 is a substrate binding site.

This sequence belongs to the shikimate kinase family. Monomer. The cofactor is Mg(2+).

The protein resides in the cytoplasm. The catalysed reaction is shikimate + ATP = 3-phosphoshikimate + ADP + H(+). The protein operates within metabolic intermediate biosynthesis; chorismate biosynthesis; chorismate from D-erythrose 4-phosphate and phosphoenolpyruvate: step 5/7. In terms of biological role, catalyzes the specific phosphorylation of the 3-hydroxyl group of shikimic acid using ATP as a cosubstrate. The sequence is that of Shikimate kinase from Synechococcus sp. (strain RCC307).